Consider the following 148-residue polypeptide: Large ribosomal subunit protein bL9 (148 aa).

It belongs to the bacterial ribosomal protein bL9 family.

Functionally, binds to the 23S rRNA. The polypeptide is Large ribosomal subunit protein bL9 (Ruminiclostridium cellulolyticum (strain ATCC 35319 / DSM 5812 / JCM 6584 / H10) (Clostridium cellulolyticum)).